A 347-amino-acid chain; its full sequence is Phenylalanine--tRNA ligase alpha subunit (347 aa).

Glutamate 261 contacts Mg(2+).

It belongs to the class-II aminoacyl-tRNA synthetase family. Phe-tRNA synthetase alpha subunit type 1 subfamily. In terms of assembly, tetramer of two alpha and two beta subunits. It depends on Mg(2+) as a cofactor.

It localises to the cytoplasm. It catalyses the reaction tRNA(Phe) + L-phenylalanine + ATP = L-phenylalanyl-tRNA(Phe) + AMP + diphosphate + H(+). In Streptococcus thermophilus (strain ATCC BAA-491 / LMD-9), this protein is Phenylalanine--tRNA ligase alpha subunit.